The chain runs to 455 residues: Serine--tRNA ligase (455 aa).

Residue 252-254 (TSE) coordinates L-serine. ATP is bound by residues 283–285 (RKE) and Val-299. An L-serine-binding site is contributed by Glu-306. 370-373 (EVVS) contributes to the ATP binding site. Residue Thr-406 coordinates L-serine.

Belongs to the class-II aminoacyl-tRNA synthetase family. Type-1 seryl-tRNA synthetase subfamily. In terms of assembly, homodimer. The tRNA molecule binds across the dimer.

It is found in the cytoplasm. The enzyme catalyses tRNA(Ser) + L-serine + ATP = L-seryl-tRNA(Ser) + AMP + diphosphate + H(+). It carries out the reaction tRNA(Sec) + L-serine + ATP = L-seryl-tRNA(Sec) + AMP + diphosphate + H(+). It participates in aminoacyl-tRNA biosynthesis; selenocysteinyl-tRNA(Sec) biosynthesis; L-seryl-tRNA(Sec) from L-serine and tRNA(Sec): step 1/1. Functionally, catalyzes the attachment of serine to tRNA(Ser). Is also able to aminoacylate tRNA(Sec) with serine, to form the misacylated tRNA L-seryl-tRNA(Sec), which will be further converted into selenocysteinyl-tRNA(Sec). This Thermococcus sibiricus (strain DSM 12597 / MM 739) protein is Serine--tRNA ligase.